Reading from the N-terminus, the 140-residue chain is Nucleoside diphosphate kinase (140 aa).

ATP is bound by residues Lys-11, Phe-59, Arg-87, Thr-93, Arg-104, and Asn-114. His-117 (pros-phosphohistidine intermediate) is an active-site residue.

The protein belongs to the NDK family. As to quaternary structure, homotetramer. It depends on Mg(2+) as a cofactor.

The protein localises to the cytoplasm. It carries out the reaction a 2'-deoxyribonucleoside 5'-diphosphate + ATP = a 2'-deoxyribonucleoside 5'-triphosphate + ADP. The catalysed reaction is a ribonucleoside 5'-diphosphate + ATP = a ribonucleoside 5'-triphosphate + ADP. Functionally, major role in the synthesis of nucleoside triphosphates other than ATP. The ATP gamma phosphate is transferred to the NDP beta phosphate via a ping-pong mechanism, using a phosphorylated active-site intermediate. The chain is Nucleoside diphosphate kinase from Maricaulis maris (strain MCS10) (Caulobacter maris).